We begin with the raw amino-acid sequence, 146 residues long: Large ribosomal subunit protein uL15 (146 aa).

The interval 1–64 (MQLNTIKPAI…MPMHRRLPKR (64 aa)) is disordered. Residues 30-39 (TATKGHKGQK) show a composition bias toward basic residues.

Belongs to the universal ribosomal protein uL15 family. Part of the 50S ribosomal subunit.

Binds to the 23S rRNA. The polypeptide is Large ribosomal subunit protein uL15 (Geobacter sp. (strain M21)).